Here is a 202-residue protein sequence, read N- to C-terminus: Transmembrane 4 L6 family member 1 (202 aa).

The Cytoplasmic segment spans residues 1-9 (MCYGKCARC). The chain crosses the membrane as a helical span at residues 10–30 (IGHSLVGLALLCIAANILLYF). The Extracellular portion of the chain corresponds to 31-49 (PNGETKYASENHLSRFVWF). A helical membrane pass occupies residues 50 to 70 (FSGIVGGGLLMLLPAFVFIGL). Residues 71–93 (EQDDCCGCCGHENCGKRCAMLSS) lie on the Cytoplasmic side of the membrane. The chain crosses the membrane as a helical span at residues 94–114 (VLAALIGIAGSGYCVIVAALG). Topologically, residues 115 to 161 (LAEGPLCLDSLGQWNYTFASTEGQYLLDTSTWSECTEPKHIVEWNVS) are extracellular. Asparagine 129 and asparagine 159 each carry an N-linked (GlcNAc...) asparagine glycan. A helical transmembrane segment spans residues 162-182 (LFSILLALGGIEFILCLIQVI). Residues 183-202 (NGVLGGICGFCCSHQQQYDC) lie on the Cytoplasmic side of the membrane.

The protein belongs to the L6 tetraspanin family. In terms of assembly, present in high molecular weight complexes in tumor cells. Interacts with SDCBP2. As to expression, highly expressed in lung, breast, colon and ovarian carcinomas. It is also present on some normal cells, endothelial cells in particular.

It is found in the membrane. This Homo sapiens (Human) protein is Transmembrane 4 L6 family member 1 (TM4SF1).